A 563-amino-acid chain; its full sequence is Coiled-coil domain-containing protein 38 (563 aa).

The span at 1–11 (MSSNLLPTLNS) shows a compositional bias: polar residues. The interval 1 to 21 (MSSNLLPTLNSGGKVKDGSTK) is disordered. Residues 129–212 (KRNTIKKFEK…VKSEIAKTEF (84 aa)) adopt a coiled-coil conformation. The interval 272–311 (ESGRTAVLSEDASQGRDSQGKPSRSLTRTPEKKKSNLAES) is disordered. Positions 282-299 (DASQGRDSQGKPSRSLTR) are enriched in polar residues. Coiled-coil stretches lie at residues 384 to 415 (NIEF…KSKL) and 497 to 522 (RDEK…AVAQ). Residues 522–563 (QPKKKLGRRLVFHSKPPSGNKQQLPLVNETKTKSQEEEYFFT) form a disordered region. Residues 523–533 (PKKKLGRRLVF) show a composition bias toward basic residues.

In terms of assembly, interacts with CCDC42, CFAP53, IFT88 and ODF2. Interacts with CCDC146. Interacts with TEKT3. Interacts with ubiquitinated histone H2A.

The protein localises to the cytoplasm. It is found in the cytoskeleton. The protein resides in the microtubule organizing center. It localises to the centrosome. Its subcellular location is the perinuclear region. The protein localises to the cell projection. It is found in the cilium. The protein resides in the flagellum. Its function is as follows. Essential for male fertility. Required for sperm flagellum biogenesis. Also required for acrosome biogenesis. Required for the attachment of developing acrosomes to the nucleus during spermiogenesis and may be involved in the transport of fibrous sheath components. This is Coiled-coil domain-containing protein 38 (CCDC38) from Homo sapiens (Human).